The following is a 347-amino-acid chain: MFIDNVKLVLSSGNGGKGAVSFRREKHVPLGGPDGGDGGNGGDVYFICDNNTHTLAHFKGKKELKAQNGQPGLGRNKNGKRGESLELIVPQGTQVIDAQSGEVLLDMLVEGQKELFLKGGKGGLGNTHFKNSTNQRPDYAQSGVAGKTLSVRLELKLIADVGLVGFPNVGKSTLISVVSNARPEIANYEFTTLTPKLGMVEVDDYNSFVMADIPGIIEGASDGRGLGLEFLRHIERTSFLLFVLDPLRDMSLKEQFCILRKELEKFSSKLYTRNFGLMLSKSDSINLGEEFAQKMEDDYNELKAYLQSQNNPQSFFIKVSSLEKTGLKELKFMLLEEVKKIRNQNNL.

Residues 1-158 form the Obg domain; it reads MFIDNVKLVL…LSVRLELKLI (158 aa). Residues 159–339 enclose the OBG-type G domain; that stretch reads ADVGLVGFPN…LKFMLLEEVK (181 aa). Residues 165-172, 190-194, 212-215, 280-283, and 320-322 each bind GTP; these read GFPNVGKS, FTTLT, DIPG, SKSD, and SSL. The Mg(2+) site is built by Ser-172 and Thr-192.

It belongs to the TRAFAC class OBG-HflX-like GTPase superfamily. OBG GTPase family. Monomer. Mg(2+) is required as a cofactor.

It localises to the cytoplasm. An essential GTPase which binds GTP, GDP and possibly (p)ppGpp with moderate affinity, with high nucleotide exchange rates and a fairly low GTP hydrolysis rate. Plays a role in control of the cell cycle, stress response, ribosome biogenesis and in those bacteria that undergo differentiation, in morphogenesis control. The sequence is that of GTPase Obg from Campylobacter lari (strain RM2100 / D67 / ATCC BAA-1060).